Here is a 365-residue protein sequence, read N- to C-terminus: Peptide chain release factor 2 (365 aa).

Position 252 is an N5-methylglutamine (Gln-252).

The protein belongs to the prokaryotic/mitochondrial release factor family. Post-translationally, methylated by PrmC. Methylation increases the termination efficiency of RF2.

It localises to the cytoplasm. Functionally, peptide chain release factor 2 directs the termination of translation in response to the peptide chain termination codons UGA and UAA. In Shewanella woodyi (strain ATCC 51908 / MS32), this protein is Peptide chain release factor 2.